Consider the following 345-residue polypeptide: DNA-directed RNA polymerase subunit alpha (345 aa).

The tract at residues 1–233 (MVRNWCSLIR…KQLQVFVGLH (233 aa)) is alpha N-terminal domain (alpha-NTD). The alpha C-terminal domain (alpha-CTD) stretch occupies residues 256–345 (LNDILLRHVE…EEMGEIQEEG (90 aa)).

It belongs to the RNA polymerase alpha chain family. In terms of assembly, homodimer. The RNAP catalytic core consists of 2 alpha, 1 beta, 1 beta' and 1 omega subunit. When a sigma factor is associated with the core the holoenzyme is formed, which can initiate transcription.

It catalyses the reaction RNA(n) + a ribonucleoside 5'-triphosphate = RNA(n+1) + diphosphate. Its function is as follows. DNA-dependent RNA polymerase catalyzes the transcription of DNA into RNA using the four ribonucleoside triphosphates as substrates. This chain is DNA-directed RNA polymerase subunit alpha, found in Syntrophus aciditrophicus (strain SB).